The following is a 430-amino-acid chain: GTPase Obg (430 aa).

Residues 1–158 (MFVDQVTISL…LDVTLELKLL (158 aa)) form the Obg domain. Residues 118 to 145 (RGGRGGRGNSRFATPRNPAPDFSENGEP) are disordered. An OBG-type G domain is found at 159-329 (ADVGLVGFPS…LLYAIADKLD (171 aa)). Residues 165–172 (GFPSVGKS), 190–194 (FTTIK), 212–215 (DLPG), 282–285 (NKMD), and 310–312 (STI) contribute to the GTP site. Mg(2+) contacts are provided by serine 172 and threonine 192. The 79-residue stretch at 352–430 (KHTPSQDKFT…ILGGEFEFVE (79 aa)) folds into the OCT domain.

The protein belongs to the TRAFAC class OBG-HflX-like GTPase superfamily. OBG GTPase family. Monomer. The cofactor is Mg(2+).

It localises to the cytoplasm. In terms of biological role, an essential GTPase which binds GTP, GDP and possibly (p)ppGpp with moderate affinity, with high nucleotide exchange rates and a fairly low GTP hydrolysis rate. Plays a role in control of the cell cycle, stress response, ribosome biogenesis and in those bacteria that undergo differentiation, in morphogenesis control. This is GTPase Obg from Staphylococcus haemolyticus (strain JCSC1435).